A 321-amino-acid polypeptide reads, in one-letter code: Protein FAM110C (321 aa).

2 disordered regions span residues 1–84 (MRAL…APAP) and 111–203 (RGSG…SQSD). Basic and acidic residues-rich tracts occupy residues 15–46 (LLPR…DRAK) and 131–145 (GKDK…DEGK). Over residues 169–181 (APAARSAAPSSVP) the composition is skewed to low complexity. The residue at position 241 (serine 241) is a Phosphoserine.

This sequence belongs to the FAM110 family. Interacts with AKT1; the interaction is transient and follows AKT1 activation. Interacts with PPP2CA and alpha-tubulin. As to expression, detected in stomach, thyroid, trachea, adrenal gland and testis, and at low levels in prostate, ovary, intestine, colon, spinal cord and lymph node.

The protein resides in the cytoplasm. It is found in the cytoskeleton. Its subcellular location is the microtubule organizing center. It localises to the centrosome. The protein localises to the spindle pole. The protein resides in the nucleus. May play a role in microtubule organization. May play a role in cell spreading and cell migration of epithelial cells; the function may involve the AKT1 signaling pathway. In Homo sapiens (Human), this protein is Protein FAM110C (FAM110C).